Here is a 497-residue protein sequence, read N- to C-terminus: Actin-binding protein WASF2 (497 aa).

2 disordered regions span residues 173-203 and 239-436; these read KEKR…KEEW and ENVD…SDAR. Residues 252–263 are compositionally biased toward low complexity; it reads SDSASSPSPSFS. Pro residues-rich tracts occupy residues 298–335 and 343–403; these read SHPP…PPLP and GTPP…PPLP. Residues 435-452 enclose the WH2 domain; sequence ARSDLLSAIRQGFQLRRV. The residue at position 473 (Ser-473) is a Phosphoserine.

The protein belongs to the SCAR/WAVE family. As to quaternary structure, binds actin and the Arp2/3 complex. Interacts with BAIAP2. Component of the WAVE2 complex composed of ABI1, CYFIP1/SRA1, NCKAP1/NAP1 (NCKAP1l/HEM1 in hematopoietic cells) and WASF2/WAVE2. Directly interacts with BRK1. Interacts with human cytomegalovirus protein UL135. Interacts with FNBP1L (via the SH3 domain).

The protein resides in the cytoplasm. It is found in the cytoskeleton. The protein localises to the cell projection. Its subcellular location is the lamellipodium. It localises to the basolateral cell membrane. Its function is as follows. Downstream effector molecule involved in the transmission of signals from tyrosine kinase receptors and small GTPases to the actin cytoskeleton. Promotes formation of actin filaments. Part of the WAVE complex that regulates lamellipodia formation. The WAVE complex regulates actin filament reorganization via its interaction with the Arp2/3 complex. The protein is Actin-binding protein WASF2 of Mus musculus (Mouse).